The chain runs to 416 residues: Histidine--tRNA ligase (416 aa).

Belongs to the class-II aminoacyl-tRNA synthetase family.

The protein localises to the cytoplasm. It catalyses the reaction tRNA(His) + L-histidine + ATP = L-histidyl-tRNA(His) + AMP + diphosphate + H(+). This is Histidine--tRNA ligase (hisS) from Methanocaldococcus jannaschii (strain ATCC 43067 / DSM 2661 / JAL-1 / JCM 10045 / NBRC 100440) (Methanococcus jannaschii).